The sequence spans 596 residues: uncharacterized protein (596 aa).

Residues 7 to 26 form a helical membrane-spanning segment; sequence FWPILLGFTVLVAAGLYYVV.

It is found in the membrane. This is an uncharacterized protein from Sinorhizobium fredii (strain NBRC 101917 / NGR234).